Here is a 269-residue protein sequence, read N- to C-terminus: Small ribosomal subunit protein uS2 (269 aa).

The segment at 224–269 (ANQGREDSEDVYSETENDTEETDEELVSEEDLKEFVENSEEESDEE) is disordered. The span at 230–269 (DSEDVYSETENDTEETDEELVSEEDLKEFVENSEEESDEE) shows a compositional bias: acidic residues.

This sequence belongs to the universal ribosomal protein uS2 family.

This Finegoldia magna (strain ATCC 29328 / DSM 20472 / WAL 2508) (Peptostreptococcus magnus) protein is Small ribosomal subunit protein uS2.